Consider the following 64-residue polypeptide: Large ribosomal subunit protein bL35 (64 aa).

It belongs to the bacterial ribosomal protein bL35 family.

This chain is Large ribosomal subunit protein bL35, found in Shewanella frigidimarina (strain NCIMB 400).